A 139-amino-acid chain; its full sequence is GSK3-beta interaction protein (139 aa).

A disordered region spans residues 1–22 (METDCNPMELSSMSGFEEGSEL). The interval 41–45 (VNDVL) is required for PRKAR2A interaction; contributes to a protective effect against H(2)O(2)-induced apoptosis. The interaction with GSK3B and acts as a GSK3B inhibitor stretch occupies residues 115 to 139 (SPAYREAFGNALLQRLEALKRDGQS).

The protein belongs to the GSKIP family. Forms a complex composed of PRKAR2A or PRKAR2B, GSK3B and GSKIP through GSKIP interaction; facilitates PKA-induced phosphorylation of GSK3B leading to GSK3B inactivation; recruits DNM1L through GSK3B for PKA-mediated phosphorylation of DNM1L; promotes beta-catenin degradation through GSK3B-induced phosphorylation of beta-catenin; stabilizes beta-catenin and enhances Wnt-induced signaling through PKA-induced phosphorylation of beta-catenin. Interacts with GSK3B; induces GSK3B-mediated phosphorylation of GSKIP and inhibits GSK3B kinase activity. In terms of processing, phosphorylated by GSK3B.

The protein resides in the cytoplasm. Its subcellular location is the nucleus. Functionally, A-kinase anchoring protein for GSK3B and PKA that regulates or facilitates their kinase activity towards their targets. The ternary complex enhances Wnt-induced signaling by facilitating the GSK3B- and PKA-induced phosphorylation of beta-catenin leading to beta-catenin degradation and stabilization respectively. Upon cAMP activation, the ternary complex contributes to neuroprotection against oxidative stress-induced apoptosis by facilitating the PKA-induced phosphorylation of DML1 and PKA-induced inactivation of GSK3B. During neurite outgrowth promotes neuron proliferation; while increases beta-catenin-induced transcriptional activity through GSK3B kinase activity inhibition, reduces N-cadherin level to promote cell cycle progression. May play a role in cleft palate formation and is required for postnatal life through modulation of the activity of GSK3B during development. The polypeptide is GSK3-beta interaction protein (Macaca fascicularis (Crab-eating macaque)).